Consider the following 184-residue polypeptide: MQASQPETWHGTTILTVRKGGKVVIGGDGQVSIGQTVIKSNAKKVRKLGKGDVIGGFAGATADAFTLFERLESKLEQYPGQLTRAAVELAKDWRTDRYLRRLEAMMLVADKDVSLVLTGTGDVLEPESGVMAIGSGGNYALAAARALIDSDKDAETIVRSALDIAADICVYTNRNLTIEALAAS.

The active site involves threonine 12. Residues alanine 166, cysteine 169, and threonine 172 each coordinate Na(+).

The protein belongs to the peptidase T1B family. HslV subfamily. A double ring-shaped homohexamer of HslV is capped on each side by a ring-shaped HslU homohexamer. The assembly of the HslU/HslV complex is dependent on binding of ATP.

The protein resides in the cytoplasm. It carries out the reaction ATP-dependent cleavage of peptide bonds with broad specificity.. Allosterically activated by HslU binding. Functionally, protease subunit of a proteasome-like degradation complex believed to be a general protein degrading machinery. This Nitrobacter winogradskyi (strain ATCC 25391 / DSM 10237 / CIP 104748 / NCIMB 11846 / Nb-255) protein is ATP-dependent protease subunit HslV.